Consider the following 466-residue polypeptide: Putative chitinase 2 (466 aa).

The first 17 residues, 1–17 (MYLTIWLVPLLAVGTWG), serve as a signal peptide directing secretion. Positions 20–380 (FNRFCHYNSW…MAVIHGLNAY (361 aa)) constitute a GH18 domain. A disulfide bond links cysteine 24 and cysteine 49. Catalysis depends on glutamate 141, which acts as the Proton donor. A coiled-coil region spans residues 395 to 447 (YNKKILRARVSLRNYRRRNQQGKVAEMEQRIRNLEQELQQSMGNMAYERQQAQ).

It belongs to the glycosyl hydrolase 18 family. As to expression, prismatic layer of shell (at protein level). Expressed primarily in the mantle with highest level in the mantle edge and lower level in the mantle pallium.

The protein resides in the secreted. It catalyses the reaction Random endo-hydrolysis of N-acetyl-beta-D-glucosaminide (1-&gt;4)-beta-linkages in chitin and chitodextrins.. This Margaritifera margaritifera (Freshwater pearl mussel) protein is Putative chitinase 2.